Reading from the N-terminus, the 350-residue chain is MSAERLVNPHSDSDDQQVEKSLRPRTLSEFIGQEKVVEQLRIAIAAARGRNESLDHTLFYGPPGLGKTSLANVVANEMGAKIKITSGPAIERAGDLAAILTNLQANDVLFIDEVHRLNRAVEEVLYPAMEDFALDLVVGKGPGARSLRLNLPRFTVIGATTRLALLTSPLRDRFVAVHRLVFYSDDAMTEIVSRSARILGVPISPEGAREIGRRARGTPRIANRILRRVRDYAQVVADGAITLQVARDALAQLEIDELGLDENDRRLLRAIIELFNGGPVGLSTLAAALAEEVDAIEDVYEPFLLQLGFLQRTPRGRIATRRAYEHLGLPYPERTLPADDESGPQQATLF.

The segment at 1-183 (MSAERLVNPH…FVAVHRLVFY (183 aa)) is large ATPase domain (RuvB-L). ATP-binding positions include Leu-22, Arg-23, Gly-64, Lys-67, Thr-68, Ser-69, 130–132 (EDF), Arg-173, Tyr-183, and Arg-220. Thr-68 provides a ligand contact to Mg(2+). Positions 184 to 254 (SDDAMTEIVS…VARDALAQLE (71 aa)) are small ATPAse domain (RuvB-S). Residues 257–350 (ELGLDENDRR…ESGPQQATLF (94 aa)) form a head domain (RuvB-H) region. Positions 312 and 317 each coordinate DNA. Residues 331-350 (YPERTLPADDESGPQQATLF) form a disordered region.

It belongs to the RuvB family. Homohexamer. Forms an RuvA(8)-RuvB(12)-Holliday junction (HJ) complex. HJ DNA is sandwiched between 2 RuvA tetramers; dsDNA enters through RuvA and exits via RuvB. An RuvB hexamer assembles on each DNA strand where it exits the tetramer. Each RuvB hexamer is contacted by two RuvA subunits (via domain III) on 2 adjacent RuvB subunits; this complex drives branch migration. In the full resolvosome a probable DNA-RuvA(4)-RuvB(12)-RuvC(2) complex forms which resolves the HJ.

Its subcellular location is the cytoplasm. It catalyses the reaction ATP + H2O = ADP + phosphate + H(+). Functionally, the RuvA-RuvB-RuvC complex processes Holliday junction (HJ) DNA during genetic recombination and DNA repair, while the RuvA-RuvB complex plays an important role in the rescue of blocked DNA replication forks via replication fork reversal (RFR). RuvA specifically binds to HJ cruciform DNA, conferring on it an open structure. The RuvB hexamer acts as an ATP-dependent pump, pulling dsDNA into and through the RuvAB complex. RuvB forms 2 homohexamers on either side of HJ DNA bound by 1 or 2 RuvA tetramers; 4 subunits per hexamer contact DNA at a time. Coordinated motions by a converter formed by DNA-disengaged RuvB subunits stimulates ATP hydrolysis and nucleotide exchange. Immobilization of the converter enables RuvB to convert the ATP-contained energy into a lever motion, pulling 2 nucleotides of DNA out of the RuvA tetramer per ATP hydrolyzed, thus driving DNA branch migration. The RuvB motors rotate together with the DNA substrate, which together with the progressing nucleotide cycle form the mechanistic basis for DNA recombination by continuous HJ branch migration. Branch migration allows RuvC to scan DNA until it finds its consensus sequence, where it cleaves and resolves cruciform DNA. This is Holliday junction branch migration complex subunit RuvB from Chloroflexus aurantiacus (strain ATCC 29366 / DSM 635 / J-10-fl).